A 543-amino-acid chain; its full sequence is Protein SGE1 (543 aa).

The Cytoplasmic portion of the chain corresponds to 1–8 (MKSTLSLT). Residues 9-29 (LCVISLLLTLFLAALDIVIVV) traverse the membrane as a helical segment. At 30 to 41 (TLYDTIGIKFHD) the chain is on the extracellular side. Residues 42 to 62 (FGNIGWLVTGYALSNAVFMLL) form a helical membrane-spanning segment. Residues 63–79 (WGRLAEILGTKECLMIS) lie on the Cytoplasmic side of the membrane. A helical membrane pass occupies residues 80–100 (VIVFEIGSLISALSNSMATLI). The Extracellular portion of the chain corresponds to 101–103 (SGR). The chain crosses the membrane as a helical span at residues 104–124 (VVAGFGGSGIESLAFVVGTSI). At 125-131 (VRENHRG) the chain is on the cytoplasmic side. Residues 132–152 (IMITALAISYVIAEGVGPFIG) traverse the membrane as a helical segment. The Extracellular segment spans residues 153-162 (GAFNEHLSWR). Residues 163–183 (WCFYINLPIGAFAFIILAFCN) traverse the membrane as a helical segment. Residues 184–227 (TSGEPHQKMWLPSKIKKIMNYDYGELLKASFWKNTFEVLVFKLD) are Cytoplasmic-facing. A helical transmembrane segment spans residues 228–248 (MVGIILSSAGFTLLMLGLSFG). At 249-255 (GNNFPWN) the chain is on the extracellular side. A helical membrane pass occupies residues 256-276 (SGIIICFFTVGPILLLLFCAY). At 277 to 300 (DFHFLSLSGLHYDNKRIKPLLTWN) the chain is on the cytoplasmic side. Residues 301–321 (IASNCGIFTSSITGFLSCFAY) traverse the membrane as a helical segment. Topologically, residues 322-341 (ELQSAYLVQLYQLVFKKKPT) are extracellular. Residues 342–362 (LASIHLWELSIPAMIATMAIA) traverse the membrane as a helical segment. Residues 363–373 (YLNSKYGIIKP) lie on the Cytoplasmic side of the membrane. Residues 374–394 (AIVFGVLCGIVGSGLFTLING) traverse the membrane as a helical segment. The Extracellular portion of the chain corresponds to 395-399 (ELSQS). Residues 400-420 (IGYSILPGIAFGSIFQATLLS) form a helical membrane-spanning segment. Residues 421–443 (SQVQITSDDPDFQNKFIEVTAFN) lie on the Cytoplasmic side of the membrane. Residues 444–464 (SFAKSLGFAFGGNMGAMIFTA) traverse the membrane as a helical segment. Over 465-508 (SLKNQMRSSQLNIPQFTSVETLLAYSTEHYDGPQSSLSKFINTA) the chain is Extracellular. The helical transmembrane segment at 509 to 529 (IHDVFYCALGCYALSFFFGIF) threads the bilayer. Residues 530-543 (TSSKKTTISAKKQQ) are Cytoplasmic-facing.

It belongs to the major facilitator superfamily.

The protein resides in the membrane. In terms of biological role, drug export permease. Multi-copy suppressor of loss-of-function mutation of GAL11. Involved specifically in transcription of GAL4-dependent genes. Can link GAL4 with the basal transcription machinery if GAL11 is missing. Confers resistance to 10-N-nonyl acridine orange (NAO) and in general to cationic dyes. The protein is Protein SGE1 (SGE1) of Saccharomyces cerevisiae (strain ATCC 204508 / S288c) (Baker's yeast).